Reading from the N-terminus, the 153-residue chain is UPF0178 protein Atu1478 (153 aa).

Belongs to the UPF0178 family.

This Agrobacterium fabrum (strain C58 / ATCC 33970) (Agrobacterium tumefaciens (strain C58)) protein is UPF0178 protein Atu1478.